A 457-amino-acid chain; its full sequence is Gamma-aminobutyric acid receptor subunit gamma-4 (457 aa).

An N-terminal signal peptide occupies residues 1-21 (MPAMVLLLCLALGPALRSARC). Residues 22–256 (ESTEEYDYDY…VSFDLSRRMG (235 aa)) are Extracellular-facing. Residues Asn-35 and Asn-112 are each glycosylated (N-linked (GlcNAc...) asparagine). Cys-173 and Cys-187 are joined by a disulfide. Asn-230 carries N-linked (GlcNAc...) asparagine glycosylation. Helical transmembrane passes span 257–279 (YFAIQTYIPCILTVVLSWVSFWI), 283–305 (STPARTSLGITTVLTMTTLSTIS), and 317–339 (AMDLFVSVCFIFVFAALMEYATL). The Cytoplasmic portion of the chain corresponds to 340 to 433 (NYLVGNKKPL…VRIHISRLDS (94 aa)). Residues 434–457 (YSRVFFPTAFLLFNIVYWIAYLYL) traverse the membrane as a helical segment.

Belongs to the ligand-gated ion channel (TC 1.A.9) family. Gamma-aminobutyric acid receptor (TC 1.A.9.5) subfamily. GABRG4 sub-subfamily. As to quaternary structure, generally pentameric. There are five types of GABA(A) receptor chains: alpha, beta, gamma, delta, and rho. As to expression, abundant in several brain regions, including the ectostriatum, nucleus rotundus and hyperstriatum ventrale.

The protein localises to the postsynaptic cell membrane. Its subcellular location is the cell membrane. GABA, the major inhibitory neurotransmitter in the vertebrate brain, mediates neuronal inhibition by binding to the GABA/benzodiazepine receptor and opening an integral chloride channel. The polypeptide is Gamma-aminobutyric acid receptor subunit gamma-4 (GABRG4) (Gallus gallus (Chicken)).